The chain runs to 138 residues: Small ribosomal subunit protein uS11c (138 aa).

The segment at 1–22 is disordered; sequence MTKPIPRIGSRRSGRIGSRKAG. Positions 9 to 22 are enriched in basic residues; the sequence is GSRRSGRIGSRKAG.

It belongs to the universal ribosomal protein uS11 family. As to quaternary structure, part of the 30S ribosomal subunit.

It localises to the plastid. Its subcellular location is the chloroplast. This Piper cenocladum (Ant piper) protein is Small ribosomal subunit protein uS11c.